A 175-amino-acid polypeptide reads, in one-letter code: NADH-quinone oxidoreductase subunit I (175 aa).

4Fe-4S ferredoxin-type domains lie at 69 to 98 (KRDEQGRERCTSCFCCMWICPADAIYIEAG) and 115 to 144 (KKFEIDLLRCIFCGMCEEACPKGAIYLDGP). Residues C78, C81, C84, C88, C124, C127, C130, and C134 each contribute to the [4Fe-4S] cluster site.

It belongs to the complex I 23 kDa subunit family. As to quaternary structure, NDH-1 is composed of 14 different subunits. Subunits NuoA, H, J, K, L, M, N constitute the membrane sector of the complex. Requires [4Fe-4S] cluster as cofactor.

It is found in the cell inner membrane. The catalysed reaction is a quinone + NADH + 5 H(+)(in) = a quinol + NAD(+) + 4 H(+)(out). In terms of biological role, NDH-1 shuttles electrons from NADH, via FMN and iron-sulfur (Fe-S) centers, to quinones in the respiratory chain. The immediate electron acceptor for the enzyme in this species is believed to be ubiquinone. Couples the redox reaction to proton translocation (for every two electrons transferred, four hydrogen ions are translocated across the cytoplasmic membrane), and thus conserves the redox energy in a proton gradient. The polypeptide is NADH-quinone oxidoreductase subunit I (Leptospira borgpetersenii serovar Hardjo-bovis (strain JB197)).